Reading from the N-terminus, the 258-residue chain is Ribosomal RNA small subunit methyltransferase J (258 aa).

S-adenosyl-L-methionine contacts are provided by residues 106–107 (RD), 122–123 (ER), and aspartate 181.

The protein belongs to the methyltransferase superfamily. RsmJ family.

It localises to the cytoplasm. The catalysed reaction is guanosine(1516) in 16S rRNA + S-adenosyl-L-methionine = N(2)-methylguanosine(1516) in 16S rRNA + S-adenosyl-L-homocysteine + H(+). Specifically methylates the guanosine in position 1516 of 16S rRNA. The sequence is that of Ribosomal RNA small subunit methyltransferase J from Pseudoalteromonas atlantica (strain T6c / ATCC BAA-1087).